Here is a 211-residue protein sequence, read N- to C-terminus: Pyridoxine/pyridoxamine 5'-phosphate oxidase (211 aa).

Substrate-binding positions include 7–10 (RREY) and K65. FMN contacts are provided by residues 60–65 (RIVLLK), 75–76 (YT), R81, K82, and Q104. 3 residues coordinate substrate: Y122, R126, and S130. FMN-binding positions include 139-140 (QS) and W184. 190-192 (RLH) contributes to the substrate binding site. An FMN-binding site is contributed by R194.

This sequence belongs to the pyridoxamine 5'-phosphate oxidase family. As to quaternary structure, homodimer. The cofactor is FMN.

The enzyme catalyses pyridoxamine 5'-phosphate + O2 + H2O = pyridoxal 5'-phosphate + H2O2 + NH4(+). It carries out the reaction pyridoxine 5'-phosphate + O2 = pyridoxal 5'-phosphate + H2O2. It participates in cofactor metabolism; pyridoxal 5'-phosphate salvage; pyridoxal 5'-phosphate from pyridoxamine 5'-phosphate: step 1/1. Its pathway is cofactor metabolism; pyridoxal 5'-phosphate salvage; pyridoxal 5'-phosphate from pyridoxine 5'-phosphate: step 1/1. Functionally, catalyzes the oxidation of either pyridoxine 5'-phosphate (PNP) or pyridoxamine 5'-phosphate (PMP) into pyridoxal 5'-phosphate (PLP). This Vibrio parahaemolyticus serotype O3:K6 (strain RIMD 2210633) protein is Pyridoxine/pyridoxamine 5'-phosphate oxidase.